The following is a 262-amino-acid chain: Nodulation protein J (262 aa).

Positions 33–259 constitute an ABC transmembrane type-2 domain; the sequence is ASLLGNLADP…FASIALFRRR (227 aa). The next 7 helical transmembrane spans lie at 37 to 57, 64 to 84, 102 to 122, 125 to 145, 149 to 169, 177 to 197, and 236 to 256; these read GNLA…GLIV, SYIA…SATF, GILF…VWAA, SVLA…ASWT, CAIP…MVVI, YFVF…GAVF, and LHVG…IALF.

This sequence belongs to the ABC-2 integral membrane protein family. Lipooligosaccharide exporter (TC 3.A.1.102) subfamily. In terms of assembly, the complex is composed of two ATP-binding proteins (NodI) and two transmembrane proteins (NodJ).

It localises to the cell inner membrane. In terms of biological role, part of the ABC transporter complex NodIJ involved in the export of the nodulation factors (Nod factors), the bacterial signal molecules that induce symbiosis and subsequent nodulation induction. Nod factors are LCO (lipo-chitin oligosaccharide), a modified beta-1,4-linked N-acetylglucosamine oligosaccharide. This subunit encodes the transporter. The sequence is that of Nodulation protein J (nodJ) from Bradyrhizobium diazoefficiens (strain JCM 10833 / BCRC 13528 / IAM 13628 / NBRC 14792 / USDA 110).